The following is a 424-amino-acid chain: Enolase (424 aa).

(2R)-2-phosphoglycerate is bound at residue Q165. The active-site Proton donor is E207. Mg(2+) is bound by residues D244, E283, and D310. Residues K335, R364, S365, and K386 each coordinate (2R)-2-phosphoglycerate. Residue K335 is the Proton acceptor of the active site.

The protein belongs to the enolase family. Mg(2+) serves as cofactor.

It localises to the cytoplasm. Its subcellular location is the secreted. It is found in the cell surface. The catalysed reaction is (2R)-2-phosphoglycerate = phosphoenolpyruvate + H2O. Its pathway is carbohydrate degradation; glycolysis; pyruvate from D-glyceraldehyde 3-phosphate: step 4/5. Catalyzes the reversible conversion of 2-phosphoglycerate (2-PG) into phosphoenolpyruvate (PEP). It is essential for the degradation of carbohydrates via glycolysis. The chain is Enolase from Chlamydia muridarum (strain MoPn / Nigg).